A 194-amino-acid polypeptide reads, in one-letter code: MAPAASRLRVESELRSLPKRALAQYLLFLKFYPVVTKAVSSGILSALGNLLAQMIEKKQKKDSRSLEVSGLLRYLVYGLFVTGPLSHYLYLFMEYWVPPEVPWARVKRLLLDRLFFAPTFLLLFFFVMNLLEGKNISVFVAKMRSGFWPALQMNWRMWTPLQFININYVPLQFRVLFANMAALFWYAYLASLGK.

The Cytoplasmic portion of the chain corresponds to 2 to 30 (APAASRLRVESELRSLPKRALAQYLLFLK). The chain crosses the membrane as a helical span at residues 31–51 (FYPVVTKAVSSGILSALGNLL). The Peroxisomal segment spans residues 52 to 74 (AQMIEKKQKKDSRSLEVSGLLRY). Residues 75-95 (LVYGLFVTGPLSHYLYLFMEY) form a helical membrane-spanning segment. Residues 96–113 (WVPPEVPWARVKRLLLDR) are Cytoplasmic-facing. Residues 114-134 (LFFAPTFLLLFFFVMNLLEGK) traverse the membrane as a helical segment. Residues 135–172 (NISVFVAKMRSGFWPALQMNWRMWTPLQFININYVPLQ) lie on the Peroxisomal side of the membrane. The helical transmembrane segment at 173-193 (FRVLFANMAALFWYAYLASLG) threads the bilayer.

The protein belongs to the peroxisomal membrane protein PXMP2/4 family. In terms of assembly, interacts with PEX19 and SIVA1.

It is found in the peroxisome membrane. Functionally, seems to be involved in pore-forming activity and may contribute to the unspecific permeability of the peroxisomal membrane. This chain is Peroxisomal membrane protein 2 (Pxmp2), found in Rattus norvegicus (Rat).